Here is a 225-residue protein sequence, read N- to C-terminus: Germin-like protein 8-3 (225 aa).

The N-terminal stretch at 1 to 23 is a signal peptide; sequence MASSSLFLLASLLVLASWQQAIA. Residues Cys33 and Cys48 are joined by a disulfide bond. Residues Asn53 and Asn78 are each glycosylated (N-linked (GlcNAc...) asparagine). Positions 60–213 constitute a Cupin type-1 domain; the sequence is FNAAKFDMPR…AFQVEKKVID (154 aa). His111, His113, Glu118, and His158 together coordinate Mn(2+).

This sequence belongs to the germin family. Oligomer (believed to be a pentamer but probably hexamer).

It localises to the secreted. The protein localises to the extracellular space. It is found in the apoplast. In terms of biological role, plays a role in broad-spectrum disease resistance. Probably has no oxalate oxidase activity even if the active site is conserved. This chain is Germin-like protein 8-3 (GER2), found in Oryza sativa subsp. japonica (Rice).